The primary structure comprises 371 residues: Peptide chain release factor 2 (371 aa).

Gln253 carries the N5-methylglutamine modification.

It belongs to the prokaryotic/mitochondrial release factor family. In terms of processing, methylated by PrmC. Methylation increases the termination efficiency of RF2.

It localises to the cytoplasm. Peptide chain release factor 2 directs the termination of translation in response to the peptide chain termination codons UGA and UAA. This chain is Peptide chain release factor 2, found in Mycobacterium ulcerans (strain Agy99).